A 380-amino-acid chain; its full sequence is Glucose-1-phosphate adenylyltransferase (380 aa).

Alpha-D-glucose 1-phosphate-binding positions include Gly-164, 179–180, and Ser-190; that span reads EK.

It belongs to the bacterial/plant glucose-1-phosphate adenylyltransferase family. As to quaternary structure, homotetramer.

The enzyme catalyses alpha-D-glucose 1-phosphate + ATP + H(+) = ADP-alpha-D-glucose + diphosphate. It participates in glycan biosynthesis; glycogen biosynthesis. In terms of biological role, involved in the biosynthesis of ADP-glucose, a building block required for the elongation reactions to produce glycogen. Catalyzes the reaction between ATP and alpha-D-glucose 1-phosphate (G1P) to produce pyrophosphate and ADP-Glc. This is Glucose-1-phosphate adenylyltransferase from Ligilactobacillus salivarius (strain UCC118) (Lactobacillus salivarius).